The sequence spans 299 residues: MAELGLNEHHQNEVINYMRFARSKRGLRLKTVDSCFQDLKESRLVEDTFTIDEVSEVLNGLQAVVHSEVESELINTAYTNVLLLRQLFAQAEKWYLKLQTDISELENRELLEQVAEFEKAEITSSNKKPILDVTKPKLAPLNEGGTAELLNKEILRLQEENEKLKSRLKTIEIQATNALDEKSKLEKALQDLQLDQGNQKDFIKAQDLSNLENTVAALKSEFQKTLNDKTENQKSLEENLATAKHDLLRVQEQLHMAEKELEKKFQQTAAYRNMKEILTKKNDQIKDLRKRLAQYEPED.

Positions 96–296 form a coiled coil; it reads LKLQTDISEL…DLRKRLAQYE (201 aa). Residues 145–299 are interaction with BSS9; that stretch reads GTAELLNKEI…KRLAQYEPED (155 aa).

The protein belongs to the LZTFL1 family. In terms of assembly, self-associates. Interacts with BBS9; the interaction mediates the association of LZTL1 with the BBsome complex and regulates BBSome ciliary trafficking. In terms of tissue distribution, expressed in prostate, ovary, stomach, pancreas, esophagus, breast, liver, bladder, kidney, thyroid, colon and lung (at protein level). Down-regulated in multiple primary tumors (at protein level). Detected in testis, heart, skeletal muscle, thymus, spleen, small intestine, and peripheral blood leukocytes.

The protein localises to the cytoplasm. In terms of biological role, regulates ciliary localization of the BBSome complex. Together with the BBSome complex, controls SMO ciliary trafficking and contributes to the sonic hedgehog (SHH) pathway regulation. May play a role in neurite outgrowth. May have tumor suppressor function. The protein is Leucine zipper transcription factor-like protein 1 (LZTFL1) of Homo sapiens (Human).